The following is a 245-amino-acid chain: tRNA pseudouridine synthase A (245 aa).

Asp52 (nucleophile) is an active-site residue. Tyr111 serves as a coordination point for substrate.

The protein belongs to the tRNA pseudouridine synthase TruA family. Homodimer.

The catalysed reaction is uridine(38/39/40) in tRNA = pseudouridine(38/39/40) in tRNA. In terms of biological role, formation of pseudouridine at positions 38, 39 and 40 in the anticodon stem and loop of transfer RNAs. The protein is tRNA pseudouridine synthase A of Xanthobacter autotrophicus (strain ATCC BAA-1158 / Py2).